Here is a 201-residue protein sequence, read N- to C-terminus: 3-isopropylmalate dehydratase small subunit (201 aa).

The protein belongs to the LeuD family. LeuD type 1 subfamily. Heterodimer of LeuC and LeuD.

It catalyses the reaction (2R,3S)-3-isopropylmalate = (2S)-2-isopropylmalate. It functions in the pathway amino-acid biosynthesis; L-leucine biosynthesis; L-leucine from 3-methyl-2-oxobutanoate: step 2/4. Functionally, catalyzes the isomerization between 2-isopropylmalate and 3-isopropylmalate, via the formation of 2-isopropylmaleate. The protein is 3-isopropylmalate dehydratase small subunit of Escherichia fergusonii (strain ATCC 35469 / DSM 13698 / CCUG 18766 / IAM 14443 / JCM 21226 / LMG 7866 / NBRC 102419 / NCTC 12128 / CDC 0568-73).